The primary structure comprises 459 residues: Elongation factor 1-alpha (459 aa).

Gly2 carries the post-translational modification N,N,N-trimethylglycine. Lys3 bears the N6,N6-dimethyllysine; alternate mark. Lys3 bears the N6-methyllysine; alternate mark. The 235-residue stretch at 5 to 239 (KSHINVVVIG…DAIDPPSRPT (235 aa)) folds into the tr-type G domain. A G1 region spans residues 14 to 21 (GHVDSGKS). A GTP-binding site is contributed by 14–21 (GHVDSGKS). Position 30 is an N6-methyllysine (Lys30). Residues 70-74 (GITID) are G2. Lys79 carries the N6,N6,N6-trimethyllysine modification. The G3 stretch occupies residues 91-94 (DAPG). GTP-binding positions include 91-95 (DAPGH) and 153-156 (NKMD). Residues 153 to 156 (NKMD) form a G4 region. A G5 region spans residues 192 to 194 (SGF). An N6,N6-dimethyllysine; alternate modification is found at Lys315. Lys315 carries the post-translational modification N6-methyllysine; alternate. The residue at position 389 (Lys389) is an N6-methyllysine.

It belongs to the TRAFAC class translation factor GTPase superfamily. Classic translation factor GTPase family. EF-Tu/EF-1A subfamily.

Its subcellular location is the cytoplasm. This protein promotes the GTP-dependent binding of aminoacyl-tRNA to the A-site of ribosomes during protein biosynthesis. In Aureobasidium pullulans (Black yeast), this protein is Elongation factor 1-alpha (TEF1).